The following is a 480-amino-acid chain: MQLKDAQLFRQQAYINGEWLDADNGQTIKVTNPATGEVIGTVPKMGTAETRRAIEAADKALPAWRALTAKERSAKLRRWFELMIENQDDLARLMTTEQGKPLAEAKGEIAYAASFIEWFAEEAKRIYGDTIPGHQPDKRLIVIKQPIGVTAAITPWNFPAAMITRKAGPALAAGCTMVLKPASQTPYSALALVELAHRAGIPAGVLSVVTGSAGEVGGELTGNSLVRKLSFTGSTEIGRQLMEECAKDIKKVSLELGGNAPFIVFDDADLDKAVEGAIISKYRNNGQTCVCANRIYVQDGVYDAFAEKLAAAVAKLKIGNGLEEGTTTGPLIDGKAVAKVQEHIEDAVSKGAKVLSGGKLIEGNFFEPTILVDVPKTAAVAKEETFGPLAPLFRFKDEAEVIAMSNDTEFGLASYFYARDMSRVFRVAEALEYGMVGINTGLISNEVAPFGGIKASGLGREGSKYGIEDYLEIKYLCISV.

NADP(+) contacts are provided by residues 156 to 157, 180 to 183, and 233 to 234; these read WN, KPAS, and GS. The active-site Proton acceptor is the Glu-255. NADP(+) is bound at residue Leu-256. The Nucleophile role is filled by Cys-289. Glu-384 serves as a coordination point for NADP(+).

Belongs to the aldehyde dehydrogenase family.

It catalyses the reaction 5-oxopentanoate + NADP(+) + H2O = glutarate + NADPH + 2 H(+). The protein operates within amino-acid degradation. Its function is as follows. Catalyzes the conversion of 5-oxopentanoate (glutarate semialdehyde) to glutarate. Involved in L-lysine degradation. This chain is Glutarate-semialdehyde dehydrogenase, found in Pseudomonas putida (strain ATCC 47054 / DSM 6125 / CFBP 8728 / NCIMB 11950 / KT2440).